A 186-amino-acid polypeptide reads, in one-letter code: Cell division protein SepF (186 aa).

The segment at 24–91 is disordered; sequence EDEEEEERYA…HNPPHLRAVP (68 aa).

It belongs to the SepF family. In terms of assembly, homodimer. Interacts with FtsZ.

It is found in the cytoplasm. Cell division protein that is part of the divisome complex and is recruited early to the Z-ring. Probably stimulates Z-ring formation, perhaps through the cross-linking of FtsZ protofilaments. Its function overlaps with FtsA. The polypeptide is Cell division protein SepF (Rubrobacter xylanophilus (strain DSM 9941 / JCM 11954 / NBRC 16129 / PRD-1)).